The chain runs to 3712 residues: Laminin subunit alpha (3712 aa).

Residues 1-22 form the signal peptide; sequence MGHGVASIGALLVILAISYCQA. The Laminin N-terminal domain maps to 23–272; it reads ELTPPYFNLA…SIKDISIGGR (250 aa). Asn-116 and Asn-219 each carry an N-linked (GlcNAc...) asparagine glycan. Disulfide bonds link Cys-273/Cys-282, Cys-275/Cys-296, Cys-298/Cys-307, Cys-310/Cys-330, Cys-333/Cys-342, Cys-335/Cys-367, Cys-370/Cys-379, Cys-382/Cys-400, Cys-403/Cys-414, Cys-405/Cys-421, Cys-423/Cys-432, Cys-435/Cys-445, Cys-448/Cys-460, Cys-450/Cys-468, Cys-470/Cys-479, Cys-482/Cys-492, Cys-495/Cys-507, Cys-497/Cys-514, Cys-516/Cys-525, Cys-528/Cys-538, Cys-541/Cys-553, Cys-543/Cys-560, Cys-562/Cys-571, Cys-574/Cys-584, Cys-587/Cys-599, Cys-589/Cys-605, Cys-607/Cys-616, Cys-619/Cys-629, Cys-632/Cys-644, Cys-634/Cys-650, Cys-652/Cys-661, Cys-664/Cys-674, Cys-677/Cys-691, Cys-679/Cys-700, Cys-702/Cys-711, Cys-714/Cys-729, Cys-732/Cys-746, Cys-734/Cys-753, Cys-755/Cys-764, Cys-767/Cys-782, Cys-785/Cys-797, Cys-787/Cys-804, and Cys-806/Cys-815. 10 consecutive Laminin EGF-like domains span residues 273 to 332, 333 to 402, 403 to 447, 448 to 494, 495 to 540, 541 to 586, 587 to 631, 632 to 676, 677 to 731, and 732 to 784; these read CMCN…NCEP, CNCH…VCSP, CQCD…NCRE, CECN…ECKA, CECN…TCSY, CDCD…DCKP, CNCS…DCLP, CHCD…SCED, CNCD…GCEI, and CDCW…GCKD. The N-linked (GlcNAc...) asparagine glycan is linked to Asn-395. The N-linked (GlcNAc...) asparagine glycan is linked to Asn-453. The N-linked (GlcNAc...) asparagine glycan is linked to Asn-508. The N-linked (GlcNAc...) asparagine glycan is linked to Asn-588. An N-linked (GlcNAc...) asparagine glycan is attached at Asn-722. One can recognise a Laminin EGF-like 11; truncated domain in the interval 785 to 815; it reads CSCDVGGSWQSVCDKISGQCKCHPRITGLAC. Positions 816-1374 are domain IV''; that stretch reads TQPLTTHFFP…TADYNSGALP (559 aa). Residues Asn-897 and Asn-1352 are each glycosylated (N-linked (GlcNAc...) asparagine). 16 disulfides stabilise this stretch: Cys-1375-Cys-1387, Cys-1377-Cys-1394, Cys-1396-Cys-1405, Cys-1408-Cys-1418, Cys-1421-Cys-1429, Cys-1423-Cys-1436, Cys-1438-Cys-1447, Cys-1450-Cys-1463, Cys-1466-Cys-1480, Cys-1468-Cys-1487, Cys-1489-Cys-1498, Cys-1501-Cys-1511, Cys-1514-Cys-1526, Cys-1516-Cys-1533, Cys-1535-Cys-1544, and Cys-1547-Cys-1562. 4 Laminin EGF-like domains span residues 1375–1420, 1421–1465, 1466–1513, and 1514–1564; these read CNCD…DCKP, CKCP…GCEE, CACN…HCEQ, and CSCH…GCTT. N-linked (GlcNAc...) asparagine glycosylation occurs at Asn-1484. Residues 1565 to 1574 form the Laminin EGF-like 16; first part domain; sequence CFCFGKTSRC. Asn-1583 and Asn-1617 each carry an N-linked (GlcNAc...) asparagine glycan. A Laminin IV type A domain is found at 1585–1775; the sequence is SLLKHVSITT…GEYQFLAVER (191 aa). The Laminin EGF-like 16; second part domain occupies 1776–1808; the sequence is CSCPPGYSGHSCEDCAPGYYRDPSGPYGGYCIP. Cystine bridges form between Cys-1778–Cys-1787, Cys-1790–Cys-1806, Cys-1809–Cys-1818, Cys-1811–Cys-1825, Cys-1828–Cys-1837, Cys-1840–Cys-1856, Cys-1859–Cys-1874, Cys-1861–Cys-1885, Cys-1887–Cys-1896, Cys-1899–Cys-1914, Cys-1917–Cys-1931, Cys-1919–Cys-1938, Cys-1941–Cys-1950, Cys-1953–Cys-1967, Cys-1970–Cys-1980, Cys-1972–Cys-1987, Cys-1989–Cys-1998, Cys-2001–Cys-2014, Cys-2017–Cys-2028, Cys-2019–Cys-2035, Cys-2037–Cys-2046, Cys-2049–Cys-2061, Cys-2064–Cys-2076, Cys-2066–Cys-2083, Cys-2085–Cys-2094, and Cys-2097–Cys-2109. Laminin EGF-like domains are found at residues 1809–1858, 1859–1916, 1917–1969, 1970–2016, 2017–2063, and 2064–2111; these read CECN…DCMI, CACP…VCKP, CECS…NCQS, CDCD…GCRA, CDCG…GCTP, and CNCN…GCQE. An N-linked (GlcNAc...) asparagine glycan is attached at Asn-1847. N-linked (GlcNAc...) asparagine glycosylation occurs at Asn-1943. An N-linked (GlcNAc...) asparagine glycan is attached at Asn-2024. Positions 2112–2671 are domain II and I; the sequence is CNNCHHALLD…EAARQLANSI (560 aa). A coiled-coil region spans residues 2178 to 2249; that stretch reads KKANSELESD…LSKNLEAAAS (72 aa). N-linked (GlcNAc...) asparagine glycans are attached at residues Asn-2196, Asn-2215, Asn-2267, Asn-2301, and Asn-2323. Residues 2301–2321 are a coiled coil; that stretch reads NKSLNALKNDIGEFSDHLEDL. A coiled-coil region spans residues 2376–2450; that stretch reads DLTLNQINQK…QYTDMTASAE (75 aa). N-linked (GlcNAc...) asparagine glycans are attached at residues Asn-2482, Asn-2524, Asn-2538, Asn-2569, Asn-2699, Asn-2720, Asn-2890, Asn-2938, and Asn-3010. The stretch at 2541-2676 forms a coiled coil; the sequence is EHQLKDINKL…LANSIKVGVN (136 aa). Laminin G-like domains follow at residues 2672-2868, 2876-3048, and 3055-3223; these read KVGV…ERDV, VTGL…EEGC, and VVSY…INGC. Cysteines 3022 and 3048 form a disulfide. Asn-3070 carries N-linked (GlcNAc...) asparagine glycosylation. Cys-3196 and Cys-3223 form a disulfide bridge. Residues 3244–3297 form a disordered region; sequence NEVESPWSNADTLPPLKPDIESTLPPTTPTTTTTTTTTTTSTTTTSTTTTTTTP. The span at 3265-3297 shows a compositional bias: low complexity; the sequence is STLPPTTPTTTTTTTTTTTSTTTTSTTTTTTTP. Laminin G-like domains lie at 3349-3528 and 3534-3709; these read GYRF…VVPC and RGLF…QGYC. N-linked (GlcNAc...) asparagine glycosylation is present at Asn-3491. Cys-3505 and Cys-3528 form a disulfide bridge. Asn-3612 carries an N-linked (GlcNAc...) asparagine glycan. A disulfide bridge links Cys-3682 with Cys-3709.

Laminin is a complex glycoprotein, consisting of three different polypeptide chains (alpha, beta, gamma), which are bound to each other by disulfide bonds into a cross-shaped molecule comprising one long and three short arms with globules at each end. Newly formed mesoderm and later prominently expressed in hemocytes, which also synthesize collagen IV. Expressed in muscles.

The protein localises to the secreted. Its subcellular location is the extracellular space. It is found in the extracellular matrix. It localises to the basement membrane. The protein resides in the synapse. The protein localises to the cell projection. Its subcellular location is the axon. It is found in the cytoplasmic vesicle. It localises to the secretory vesicle. The protein resides in the synaptic vesicle. Functionally, binding to cells via a high affinity receptor, laminin is thought to mediate the attachment, migration and organization of cells into tissues during embryonic development by interacting with other extracellular matrix components. Activates presynaptic signaling involving integrin alpha-PS3/beta-nu and Fak to suppress neuromuscular junction (NMJ) growth during larval development and during low crawling activity, but not during higher-crawling conditions. Mediates, together with integrin alpha-PS3/beta-nu, glutamate receptor-modulated NMJ growth. This chain is Laminin subunit alpha (LanA), found in Drosophila melanogaster (Fruit fly).